We begin with the raw amino-acid sequence, 274 residues long: MSGKAYFVNGEHGPAIIEGPLTALNWLTILPVPSATAFDRVTGGRVMASVPFIGIVLGIVGGAIAFAATSLGVASIVAATVIVCFWELFTRFMHLDGLADVSDALGSYAPPARAREIIADPATGLIGMGACLISILIHISSFTALLDAHLWWMVMITPMIGRFCAIFGAHSRLKPMNPTGFGAMLIGTVKTHTIIAWLCVLLVICIGVPLAMDRGELITITILGLLCSVTLALVEIRHLHRRFEGMNGDTTGFIMHSATALCALVFAVGVGIVA.

7 helical membrane-spanning segments follow: residues 46 to 66 (VMAS…AIAF), 69 to 89 (TSLG…WELF), 117 to 137 (IIAD…SILI), 151 to 173 (WWMV…HSRL), 192 to 212 (HTII…PLAM), 216 to 236 (ELIT…LVEI), and 253 to 273 (FIMH…VGIV).

This sequence belongs to the CobS family. It depends on Mg(2+) as a cofactor.

It localises to the cell membrane. The catalysed reaction is alpha-ribazole + adenosylcob(III)inamide-GDP = adenosylcob(III)alamin + GMP + H(+). The enzyme catalyses alpha-ribazole 5'-phosphate + adenosylcob(III)inamide-GDP = adenosylcob(III)alamin 5'-phosphate + GMP + H(+). It functions in the pathway cofactor biosynthesis; adenosylcobalamin biosynthesis; adenosylcobalamin from cob(II)yrinate a,c-diamide: step 7/7. Joins adenosylcobinamide-GDP and alpha-ribazole to generate adenosylcobalamin (Ado-cobalamin). Also synthesizes adenosylcobalamin 5'-phosphate from adenosylcobinamide-GDP and alpha-ribazole 5'-phosphate. This is Adenosylcobinamide-GDP ribazoletransferase from Corynebacterium diphtheriae (strain ATCC 700971 / NCTC 13129 / Biotype gravis).